The following is a 228-amino-acid chain: Ankyrin repeat domain-containing protein 46 (228 aa).

ANK repeat units follow at residues 11 to 40 (QTNVPLLQACIDGDFTYSKRLLESGFDPNI), 44 to 74 (RGRTGLHLAAARGNVDICQLLHKFGADPLAT), 77 to 103 (QGNTALHLCGHVDTIQFLVSNGLKIDI), and 107 to 138 (QGATPLVLAKRRGVNKDVIRLLESLEEQEVKG). A helical membrane pass occupies residues 195 to 215 (VLLLILVIALLSLGIAYYVSG).

The protein localises to the membrane. In Rattus norvegicus (Rat), this protein is Ankyrin repeat domain-containing protein 46 (Ankrd46).